The following is a 143-amino-acid chain: Transcriptional regulator MraZ (143 aa).

SpoVT-AbrB domains are found at residues 5-47 (EYEH…PRGV) and 76-119 (AADM…SPRR).

It belongs to the MraZ family. Forms oligomers.

It localises to the cytoplasm. It is found in the nucleoid. In Roseiflexus castenholzii (strain DSM 13941 / HLO8), this protein is Transcriptional regulator MraZ.